Here is a 440-residue protein sequence, read N- to C-terminus: MQKGKGRTSRIRRRKLCGSSESRGVNESHKSEFIELRKWLKARKFQDSNLAPACFPGTGRGLMSQTSLQEGQMIISLPESCLLTTDTVIRSYLGAYITKWKPPPSPLLALCTFLVSEKHAGHRSLWKPYLEILPKAYTCPVCLEPEVVNLLPKSLKAKAEEQRAHVQEFFASSRDFFSSLQPLFAEAVDSIFSYSALLWAWCTVNTRAVYLRPRQRECLSAEPDTCALAPYLDLLNHSPHVQVKAAFNEETHSYEIRTTSRWRKHEEVFICYGPHDNQRLFLEYGFVSVHNPHACVYVSREILVKYLPSTDKQMDKKISILKDHGYIENLTFGWDGPSWRLLTALKLLCLEAEKFTCWKKVLLGEVISDTNEKTSLDIAQKICYYFIEETNAVLQKVSHMKDEKEALINQLTLVESLWTEELKILRASAETLHSLQTAFT.

Positions 1 to 16 (MQKGKGRTSRIRRRKL) are enriched in basic residues. Positions 1 to 24 (MQKGKGRTSRIRRRKLCGSSESRG) are disordered. The region spanning 48–273 (SNLAPACFPG…KHEEVFICYG (226 aa)) is the SET domain. Y272 is an S-adenosyl-L-methionine binding site.

This sequence belongs to the class V-like SAM-binding methyltransferase superfamily. SETD4 family. In terms of assembly, forms a ternary complex with TBK1 and ZNF268; the interaction with TBK1 is ZNF268-dependent and leads to TBK1 monomethylation.

It localises to the cytoplasm. The protein localises to the cytosol. Its subcellular location is the nucleus. The catalysed reaction is L-lysyl(4)-[histone H3] + S-adenosyl-L-methionine = N(6)-methyl-L-lysyl(4)-[histone H3] + S-adenosyl-L-homocysteine + H(+). It catalyses the reaction N(6)-methyl-L-lysyl(4)-[histone H3] + S-adenosyl-L-methionine = N(6),N(6)-dimethyl-L-lysyl(4)-[histone H3] + S-adenosyl-L-homocysteine + H(+). The enzyme catalyses L-lysyl(20)-[histone H4] + S-adenosyl-L-methionine = N(6)-methyl-L-lysyl(20)-[histone H4] + S-adenosyl-L-homocysteine + H(+). It carries out the reaction N(6)-methyl-L-lysyl(20)-[histone H4] + S-adenosyl-L-methionine = N(6),N(6)-dimethyl-L-lysyl(20)-[histone H4] + S-adenosyl-L-homocysteine + H(+). The catalysed reaction is N(6),N(6)-dimethyl-L-lysyl(20)-[histone H4] + S-adenosyl-L-methionine = N(6),N(6),N(6)-trimethyl-L-lysyl(20)-[histone H4] + S-adenosyl-L-homocysteine + H(+). It catalyses the reaction L-lysyl-[protein] + S-adenosyl-L-methionine = N(6)-methyl-L-lysyl-[protein] + S-adenosyl-L-homocysteine + H(+). Protein-lysine N-methyltransferase that methylates both histones and non-histone proteins. Via its catalytic activity, regulates many processes, including cell proliferation, cell differentiation, inflammatory response and apoptosis. Regulates the inflammatory response by mediating mono- and dimethylation of 'Lys-4' of histone H3 (H3K4me1 and H3K4me2, respectively), leading to activate the transcription of pro-inflammatory cytokines IL6 and TNF-alpha. Through the catalysis of TBK1 monomethylation, may regulate virus-induced interferon signaling. TBK1 monomethylation enhances its interaction with MAVS, STING and IRF3, hence promoting antiviral interferon signaling. Also involved in the regulation of stem cell quiescence by catalyzing the trimethylation of 'Lys-20' of histone H4 (H4K20me3), thereby promoting heterochromatin formation. In the brain, epigenetically controls quiescence of neural stem cells for sustaining a protected neural stem cell population and maintaining a stem cell reservoir for neurogenesis. Involved in proliferation, migration, paracrine and myogenic differentiation of bone marrow mesenchymal stem cells (BMSCs). Through the catalysis of XRCC5/Ku70 trimethylation, regulates BAX-mediated apoptosis. SETD4-catalyzed XRCC5 methylation results in XRCC5 translocation to the cytoplasm, where it interacts with BAX, sequestering it from the mitochondria, hence preventing BAX-mediated apoptosis. This chain is SET domain-containing protein 4, found in Homo sapiens (Human).